A 179-amino-acid chain; its full sequence is Viral interleukin-10 homolog (179 aa).

The signal sequence occupies residues 1 to 18 (MFRASLLCCLVLLAGVWA). Disulfide bonds link Cys30–Cys127 and Cys80–Cys133. N-linked (GlcNAc...) asparagine; by host glycans are attached at residues Asn100 and Asn135.

Belongs to the IL-10 family.

The protein resides in the secreted. Its function is as follows. Down-regulates the expression of the TAP1 gene (transporter associated with antigen processing), thereby affecting the transport of peptides into the endoplasmic reticulum and subsequent peptide loading by MHC class I molecules. In consequence, infected cells are masked for immune recognition by cytotoxic T-lymphocytes. The sequence is that of Viral interleukin-10 homolog from Equus caballus (Horse).